The chain runs to 449 residues: uncharacterized protein (449 aa).

The TRAM domain occupies 3–61 (VWQQGATIELRIDSLSHTGEGVGRWQDRVVFVADTVPGDRLRVRLTHVKRQYAHGKVLE). Positions 74, 80, 83, and 161 each coordinate [4Fe-4S] cluster. Residues Q283, Y312, E333, and D378 each contribute to the S-adenosyl-L-methionine site. C405 (nucleophile) is an active-site residue.

The protein belongs to the class I-like SAM-binding methyltransferase superfamily. RNA M5U methyltransferase family.

This is an uncharacterized protein from Thermosynechococcus vestitus (strain NIES-2133 / IAM M-273 / BP-1).